Consider the following 387-residue polypeptide: Protein-glutamate methylesterase/protein-glutamine glutaminase 2 (387 aa).

One can recognise a Response regulatory domain in the interval 4-121 (KVLVVDDSGF…SRNPQKVKQL (118 aa)). Aspartate 55 carries the post-translational modification 4-aspartylphosphate. The segment covering 148 to 183 (AAPAAPTSSSRAPAPTTAPARAVPTRTAAPATAPAA) has biased composition (low complexity). Positions 148–199 (AAPAAPTSSSRAPAPTTAPARAVPTRTAAPATAPAAHAHHAPAHPTTSGTPK) are disordered. Residues 192–384 (PTTSGTPKRK…LDDIGRHLVE (193 aa)) enclose the CheB-type methylesterase domain. Active-site residues include serine 211, histidine 238, and aspartate 331.

It belongs to the CheB family. Phosphorylated by CheA. Phosphorylation of the N-terminal regulatory domain activates the methylesterase activity.

The protein localises to the cytoplasm. It carries out the reaction [protein]-L-glutamate 5-O-methyl ester + H2O = L-glutamyl-[protein] + methanol + H(+). The catalysed reaction is L-glutaminyl-[protein] + H2O = L-glutamyl-[protein] + NH4(+). In terms of biological role, involved in chemotaxis. Part of a chemotaxis signal transduction system that modulates chemotaxis in response to various stimuli. Catalyzes the demethylation of specific methylglutamate residues introduced into the chemoreceptors (methyl-accepting chemotaxis proteins or MCP) by CheR. Also mediates the irreversible deamidation of specific glutamine residues to glutamic acid. This Pseudomonas savastanoi pv. phaseolicola (strain 1448A / Race 6) (Pseudomonas syringae pv. phaseolicola (strain 1448A / Race 6)) protein is Protein-glutamate methylesterase/protein-glutamine glutaminase 2.